The sequence spans 409 residues: LL-diaminopimelate aminotransferase (409 aa).

Substrate contacts are provided by Y15 and G42. Pyridoxal 5'-phosphate-binding positions include Y72, 108 to 109 (AK), Y132, N186, Y217, and 245 to 247 (SFS). The substrate site is built by K109, Y132, and N186. K248 bears the N6-(pyridoxal phosphate)lysine mark. Positions 256 and 291 each coordinate pyridoxal 5'-phosphate. The substrate site is built by N291 and R387.

It belongs to the class-I pyridoxal-phosphate-dependent aminotransferase family. LL-diaminopimelate aminotransferase subfamily. As to quaternary structure, homodimer. Requires pyridoxal 5'-phosphate as cofactor.

The catalysed reaction is (2S,6S)-2,6-diaminopimelate + 2-oxoglutarate = (S)-2,3,4,5-tetrahydrodipicolinate + L-glutamate + H2O + H(+). It functions in the pathway amino-acid biosynthesis; L-lysine biosynthesis via DAP pathway; LL-2,6-diaminopimelate from (S)-tetrahydrodipicolinate (aminotransferase route): step 1/1. In terms of biological role, involved in the synthesis of meso-diaminopimelate (m-DAP or DL-DAP), required for both lysine and peptidoglycan biosynthesis. Catalyzes the direct conversion of tetrahydrodipicolinate to LL-diaminopimelate. This Parabacteroides distasonis (strain ATCC 8503 / DSM 20701 / CIP 104284 / JCM 5825 / NCTC 11152) protein is LL-diaminopimelate aminotransferase.